The chain runs to 215 residues: Formate dehydrogenase subunit beta (215 aa).

Residues 3-32 (KGFFVDTTRCTACRGCQVACKQWHGNPATP) form the 4Fe-4S ferredoxin-type 1 domain. 12 residues coordinate [4Fe-4S] cluster: Cys-12, Cys-15, Cys-18, Cys-22, Cys-73, Cys-76, Cys-81, Cys-121, Cys-138, Cys-141, Cys-153, and Cys-157. The 40-residue stretch at 129–168 (VAESNQMAKCDMCIDRITNGLRPACVTSCPTGAMNFGDLS) folds into the 4Fe-4S ferredoxin-type 2 domain.

Heterodimer of alpha (FdhA) and beta (FdhB) subunits. It depends on [4Fe-4S] cluster as a cofactor.

Its subcellular location is the periplasm. Beta chain of the formate dehydrogenase (FDH) catalyzes the reversible two-electron oxidation of formate to carbon dioxide. FDH loses activity in the presence of air, but this activity can be restored. This chain is an electron transfer unit. The protein is Formate dehydrogenase subunit beta of Megalodesulfovibrio gigas (strain ATCC 19364 / DSM 1382 / NCIMB 9332 / VKM B-1759) (Desulfovibrio gigas).